Here is a 269-residue protein sequence, read N- to C-terminus: uncharacterized protein (269 aa).

A compositionally biased stretch (pro residues) spans 1-16; the sequence is MTDVPSKPPQTTPPPK. Disordered regions lie at residues 1–110 and 157–269; these read MTDV…TISG and ILQQ…PTIQ. Polar residues predominate over residues 21–45; sequence APTTIFSSPPQLPDRSSLNISHTAS. The segment covering 46-58 has biased composition (low complexity); that stretch reads TPTLTPTPLQQQQ. Over residues 80-93 the composition is skewed to polar residues; that stretch reads SFSNSPNRQTQSFI. Residues 159–181 are compositionally biased toward low complexity; sequence QQPQQSHSPQQQQQQHTPNHQQP. Polar residues predominate over residues 182 to 195; sequence LSPQQQKDLAQKRS. Positions 198–213 are enriched in pro residues; it reads PLPPRPNKNRPLPTPI.

This is an uncharacterized protein from Dictyostelium discoideum (Social amoeba).